A 196-amino-acid chain; its full sequence is Ribosome maturation factor RimP (196 aa).

The protein belongs to the RimP family.

It is found in the cytoplasm. In terms of biological role, required for maturation of 30S ribosomal subunits. This Lawsonia intracellularis (strain PHE/MN1-00) protein is Ribosome maturation factor RimP.